Reading from the N-terminus, the 279-residue chain is NADPH-dependent 7-cyano-7-deazaguanine reductase (279 aa).

86 to 88 (IES) is a binding site for substrate. Residue 88–89 (SK) participates in NADPH binding. The active-site Thioimide intermediate is cysteine 187. The active-site Proton donor is the aspartate 194. 226-227 (HE) contacts substrate. 255 to 256 (RG) contacts NADPH.

This sequence belongs to the GTP cyclohydrolase I family. QueF type 2 subfamily. As to quaternary structure, homodimer.

It localises to the cytoplasm. The enzyme catalyses 7-aminomethyl-7-carbaguanine + 2 NADP(+) = 7-cyano-7-deazaguanine + 2 NADPH + 3 H(+). Its pathway is tRNA modification; tRNA-queuosine biosynthesis. Functionally, catalyzes the NADPH-dependent reduction of 7-cyano-7-deazaguanine (preQ0) to 7-aminomethyl-7-deazaguanine (preQ1). This is NADPH-dependent 7-cyano-7-deazaguanine reductase from Haemophilus influenzae (strain PittEE).